The sequence spans 512 residues: MCEEGETYCPEVKDAKQAKSLGKICMKCKESSAALLIRAGDAFCKSCFKEYFVHKFRATLGKNRVIYPGEKVLLAYSGGPSSSAMVRQVQEGLSRDAPKKLRFVPGILFIDEGTACGMSWEERQQILSEICSVLQQTKIPFHIVSLEQVFSLPGSVLQRGAPEQRPNYKEEVDRFLVQEREQGDAGCSEMLERLEVTDSDSPGSSDKMYQSTCSRPPDMHTQKLKQLFASAKTLTAKQQLLHTLRSHLILHIARTCGYSKVMTGESCTRLSIRLLSNVSLGRGAFLPLDTGFCDSRYGDVDIIRPMREYSSKEIAYYNRFFNVLPIFIPALDTKASENSSIQHLTEVFVNRLQADFPSTVSTLYRTSEKLNVSIIDADQETCAKDRCLLCLSPLDTQAGKASAFSATQLSHHLSQKIPMKSNDLANNSDKSCCQGGQGCKEAGYGDTCQSRALQTPSFVHMLCYSCRLTVKDMQSLDVLPQYVLHEAEYRCHRTEMRKEIQEFLLEEDDGDS.

The tract at residues 196-215 (VTDSDSPGSSDKMYQSTCSR) is disordered. Over residues 199–214 (SDSPGSSDKMYQSTCS) the composition is skewed to polar residues.

The protein belongs to the CTU2/NCS2 family.

It is found in the cytoplasm. The protein operates within tRNA modification; 5-methoxycarbonylmethyl-2-thiouridine-tRNA biosynthesis. In terms of biological role, plays a central role in 2-thiolation of mcm(5)S(2)U at tRNA wobble positions of tRNA(Lys), tRNA(Glu) and tRNA(Gln). May act by forming a heterodimer with ctu1/atpbd3 that ligates sulfur from thiocarboxylated urm1 onto the uridine of tRNAs at wobble position. The sequence is that of Cytoplasmic tRNA 2-thiolation protein 2-B (ctu2-b) from Xenopus laevis (African clawed frog).